Here is a 195-residue protein sequence, read N- to C-terminus: MKIGIVTGIPGVGKTTVLSFADKILTEKGISHKIVNYGDYMLNTALKEGYVKSRDEIRKLQIEKQRELQALAARRIVEDLSLLGDEGIGLIDTHAVIRTPAGYLPGLPRHVIEVLSPKVIFLLEADPKIILERQKRDSSRARTDYSDTAVINEVIQFARYSAMASAVLVGASVKVVVNQEGDPSIAASEIINSLM.

Position 8–16 (8–16) interacts with ATP; the sequence is GIPGVGKTT.

The protein belongs to the archaeal adenylate kinase family. In terms of assembly, homotrimer.

It localises to the cytoplasm. The enzyme catalyses AMP + ATP = 2 ADP. This is Adenylate kinase (adkA) from Saccharolobus solfataricus (strain ATCC 35092 / DSM 1617 / JCM 11322 / P2) (Sulfolobus solfataricus).